The sequence spans 178 residues: Caveolin-1 (178 aa).

Ser-2 bears the N-acetylserine mark. Ser-2 is modified (phosphoserine). A required for homooligomerization region spans residues Ser-2–Val-94. The Cytoplasmic portion of the chain corresponds to Ser-2–Ser-104. N6-acetyllysine; alternate is present on Lys-5. Lys-5 is covalently cross-linked (Glycyl lysine isopeptide (Lys-Gly) (interchain with G-Cter in ubiquitin); alternate). Phosphotyrosine is present on Tyr-6. The residue at position 9 (Ser-9) is a Phosphoserine. Tyr-14 bears the Phosphotyrosine; by ABL1 mark. At Tyr-25 the chain carries Phosphotyrosine. Residues Lys-26, Lys-39, Lys-47, and Lys-57 each participate in a glycyl lysine isopeptide (Lys-Gly) (interchain with G-Cter in ubiquitin) cross-link. The interaction with CAVIN3 stretch occupies residues Asp-82 to Val-94. The helical intramembrane region spans Ala-105 to Leu-125. Topologically, residues His-126–Ile-178 are cytoplasmic. The interacts with SPRY1, SPRY2, SPRY3 and SPRY4 stretch occupies residues Val-131–Gln-142. Residues Cys-133, Cys-143, and Cys-156 are each lipidated (S-palmitoyl cysteine). The interacts with SPRY1, SPRY2, and SPRY4 stretch occupies residues Ser-149–Phe-160. Residues Phe-167–Ile-178 are interacts with SPRY1, SPRY2, SPRY3 and SPRY4.

It belongs to the caveolin family. In terms of assembly, homooligomer. Interacts with GLIPR2. Interacts with NOSTRIN. Interacts with SNAP25 and STX1A. Interacts (via the N-terminus) with DPP4; the interaction is direct. Interacts with CTNNB1, CDH1 and JUP. Interacts with PACSIN2; this interaction induces membrane tubulation. Interacts with SLC7A9. Interacts with BMX and BTK. Interacts with TGFBR1. Interacts with CAVIN3 (via leucine-zipper domain) in a cholesterol-sensitive manner. Interacts with CAVIN1. Interacts with EHD2 in a cholesterol-dependent manner. Forms a ternary complex with UBXN6 and VCP; mediates CAV1 targeting to lysosomes for degradation. Interacts with ABCG1; this interaction regulates ABCG1-mediated cholesterol efflux. Interacts with NEU3; this interaction enhances NEU3 sialidase activity within caveola. Interacts (via C-terminus) with SPRY1, SPRY2 (via C-terminus), SPRY3, and SPRY4. Interacts with IGFBP5; this interaction allows trafficking of IGFBP5 from the plasma membrane to the nucleus. Phosphorylated at Tyr-14 by ABL1 in response to oxidative stress. In terms of processing, ubiquitinated. Undergo monoubiquitination and multi- and/or polyubiquitination. Monoubiquitination of N-terminal lysines promotes integration in a ternary complex with UBXN6 and VCP which promotes oligomeric CAV1 targeting to lysosomes for degradation. Ubiquitinated by ZNRF1; leading to degradation and modulation of the TLR4-mediated immune response.

It localises to the golgi apparatus membrane. It is found in the cell membrane. The protein resides in the membrane. Its subcellular location is the caveola. The protein localises to the membrane raft. May act as a scaffolding protein within caveolar membranes. Forms a stable heterooligomeric complex with CAV2 that targets to lipid rafts and drives caveolae formation. Mediates the recruitment of CAVIN proteins (CAVIN1/2/3/4) to the caveolae. Interacts directly with G-protein alpha subunits and can functionally regulate their activity. Involved in the costimulatory signal essential for T-cell receptor (TCR)-mediated T-cell activation. Its binding to DPP4 induces T-cell proliferation and NF-kappa-B activation in a T-cell receptor/CD3-dependent manner. Recruits CTNNB1 to caveolar membranes and may regulate CTNNB1-mediated signaling through the Wnt pathway. Negatively regulates TGFB1-mediated activation of SMAD2/3 by mediating the internalization of TGFBR1 from membrane rafts leading to its subsequent degradation. Binds 20(S)-hydroxycholesterol (20(S)-OHC). This chain is Caveolin-1 (CAV1), found in Loxodonta africana (African elephant).